Consider the following 338-residue polypeptide: S-adenosylmethionine:tRNA ribosyltransferase-isomerase (338 aa).

The protein belongs to the QueA family. As to quaternary structure, monomer.

The protein localises to the cytoplasm. The catalysed reaction is 7-aminomethyl-7-carbaguanosine(34) in tRNA + S-adenosyl-L-methionine = epoxyqueuosine(34) in tRNA + adenine + L-methionine + 2 H(+). The protein operates within tRNA modification; tRNA-queuosine biosynthesis. In terms of biological role, transfers and isomerizes the ribose moiety from AdoMet to the 7-aminomethyl group of 7-deazaguanine (preQ1-tRNA) to give epoxyqueuosine (oQ-tRNA). This Francisella tularensis subsp. novicida (strain U112) protein is S-adenosylmethionine:tRNA ribosyltransferase-isomerase.